Here is a 60-residue protein sequence, read N- to C-terminus: Small integral membrane protein 3 (60 aa).

Residues 20 to 40 form a helical membrane-spanning segment; it reads IWAIVLIILATVVIMTSLFLC.

It is found in the membrane. This Rattus norvegicus (Rat) protein is Small integral membrane protein 3 (Smim3).